The sequence spans 451 residues: MGRERVTVVGGGLAGSEAAWRLAQGGVEVELVEMKPGRRSPAHVLDGLAELVCSNSLRSDNPHNAVGLLHEELRRLGSLVLSAADATRVPAGDALAVDRERFSALVTGRLRGHPLVRVRQEELLRLPEGPGLTLVATGPLTGDALAADVAALAGGRLHFYDAIAPIVAADSIDMSIAYARSRYGKGSGDDYLNLPFDEGQYRAFVGALLAGEKVAAHDFEEPRYFEGCLPIEVMAERGADVLAYGPMKPVGLEDPRTGRRPFAVVQLRREDVAGTAYNLVGFQTRLTWTEQRRILREYVPGLAGAEFVRLGQIHRNTFLEAPRVLAPDLSARERPHLFFAGQITGVEGYVESAACGHLAARAMLDRLAGRPFLPPPAATALGALHRHLTGEAHPPGYDYQPTNVVFALFPPLTGRHRGKAARKDAHAERARKEIAPWIDPWTHTARGAAAP.

Residue 10 to 15 (GGGLAG) participates in FAD binding.

This sequence belongs to the MnmG family. TrmFO subfamily. FAD is required as a cofactor.

The protein localises to the cytoplasm. It carries out the reaction uridine(54) in tRNA + (6R)-5,10-methylene-5,6,7,8-tetrahydrofolate + NADH + H(+) = 5-methyluridine(54) in tRNA + (6S)-5,6,7,8-tetrahydrofolate + NAD(+). The catalysed reaction is uridine(54) in tRNA + (6R)-5,10-methylene-5,6,7,8-tetrahydrofolate + NADPH + H(+) = 5-methyluridine(54) in tRNA + (6S)-5,6,7,8-tetrahydrofolate + NADP(+). In terms of biological role, catalyzes the folate-dependent formation of 5-methyl-uridine at position 54 (M-5-U54) in all tRNAs. The chain is Methylenetetrahydrofolate--tRNA-(uracil-5-)-methyltransferase TrmFO from Anaeromyxobacter sp. (strain Fw109-5).